The chain runs to 807 residues: Glycerol-3-phosphate acyltransferase (807 aa).

The HXXXXD motif motif lies at 305–310; that stretch reads CHRSHM.

It belongs to the GPAT/DAPAT family.

The protein localises to the cell inner membrane. The catalysed reaction is sn-glycerol 3-phosphate + an acyl-CoA = a 1-acyl-sn-glycero-3-phosphate + CoA. The protein operates within phospholipid metabolism; CDP-diacylglycerol biosynthesis; CDP-diacylglycerol from sn-glycerol 3-phosphate: step 1/3. This is Glycerol-3-phosphate acyltransferase from Escherichia coli O139:H28 (strain E24377A / ETEC).